Reading from the N-terminus, the 465-residue chain is Argininosuccinate lyase (465 aa).

Belongs to the lyase 1 family. Argininosuccinate lyase subfamily.

The protein localises to the cytoplasm. It catalyses the reaction 2-(N(omega)-L-arginino)succinate = fumarate + L-arginine. It functions in the pathway amino-acid biosynthesis; L-arginine biosynthesis; L-arginine from L-ornithine and carbamoyl phosphate: step 3/3. The polypeptide is Argininosuccinate lyase (Nitrobacter winogradskyi (strain ATCC 25391 / DSM 10237 / CIP 104748 / NCIMB 11846 / Nb-255)).